Here is a 763-residue protein sequence, read N- to C-terminus: Autophagy-related protein 18f (763 aa).

WD repeat units follow at residues 345–385 and 402–441; these read AHKS…STSR and FTNA…EGDA. Residues 701–711 show a composition bias toward polar residues; sequence NESIQSPSTTT. The segment at 701–763 is disordered; the sequence is NESIQSPSTT…SEDEDEEQVD (63 aa). Composition is skewed to basic and acidic residues over residues 712 to 725 and 741 to 754; these read QDDK…HGTE and PVDK…KNHS.

It belongs to the WD repeat PROPPIN family. As to quaternary structure, component of the PI(3,5)P2 regulatory complex at least composed of ATG18, SAC/FIG4, FAB1 and VAC14. Expressed in roots, flowers and leaves.

The protein resides in the preautophagosomal structure membrane. The protein localises to the vacuole membrane. In terms of biological role, the PI(3,5)P2 regulatory complex regulates both the synthesis and turnover of phosphatidylinositol 3,5-bisphosphate (PtdIns(3,5)P2). Required for autophagy. The chain is Autophagy-related protein 18f (ATG18F) from Arabidopsis thaliana (Mouse-ear cress).